Consider the following 665-residue polypeptide: Succinate dehydrogenase [ubiquinone] flavoprotein subunit B, mitochondrial (665 aa).

A mitochondrion-targeting transit peptide spans Met1–Asp45. 5 residues coordinate FAD: Ala72, Ala75, Thr94, Lys95, and Ser101. His102 carries the tele-8alpha-FAD histidine modification. Thr103, Gly108, Ala224, and Asp278 together coordinate FAD. Oxaloacetate is bound by residues His299, Arg343, and His410. Arg343 serves as the catalytic Proton acceptor. Glu443 lines the FAD pocket. Arg454 and Ala457 together coordinate oxaloacetate. FAD-binding residues include Ser459 and Leu460.

This sequence belongs to the FAD-dependent oxidoreductase 2 family. FRD/SDH subfamily. As to quaternary structure, component of complex II composed of four subunits: a flavoprotein (FP), an iron-sulfur protein (IP), and a cytochrome b composed of a large and a small subunit. Requires FAD as cofactor.

The protein resides in the mitochondrion inner membrane. It carries out the reaction a ubiquinone + succinate = a ubiquinol + fumarate. The enzyme catalyses (R)-malate + a quinone = enol-oxaloacetate + a quinol. The catalysed reaction is (S)-malate + a quinone = enol-oxaloacetate + a quinol. It functions in the pathway carbohydrate metabolism; tricarboxylic acid cycle; fumarate from succinate (eukaryal route): step 1/1. Its activity is regulated as follows. Enol-oxaloacetate inhibits the succinate dehydrogenase activity. Functionally, flavoprotein (FP) subunit of succinate dehydrogenase (SDH) that is involved in complex II of the mitochondrial electron transport chain and is responsible for transferring electrons from succinate to ubiquinone (coenzyme Q). SDH also oxidizes malate to the non-canonical enol form of oxaloacetate, enol-oxaloacetate. Enol-oxaloacetate, which is a potent inhibitor of the succinate dehydrogenase activity, is further isomerized into keto-oxaloacetate. The protein is Succinate dehydrogenase [ubiquinone] flavoprotein subunit B, mitochondrial (sdha-b) of Xenopus laevis (African clawed frog).